Reading from the N-terminus, the 194-residue chain is Glycerol-3-phosphate acyltransferase (194 aa).

Transmembrane regions (helical) follow at residues 7-27, 59-79, 86-106, 116-136, and 157-177; these read LLMA…YWVC, LTLF…AMLG, GVTA…HFKG, AGLA…AAVV, and AWRL…FILI.

The protein belongs to the PlsY family. In terms of assembly, probably interacts with PlsX.

It is found in the cell inner membrane. The enzyme catalyses an acyl phosphate + sn-glycerol 3-phosphate = a 1-acyl-sn-glycero-3-phosphate + phosphate. It functions in the pathway lipid metabolism; phospholipid metabolism. Its function is as follows. Catalyzes the transfer of an acyl group from acyl-phosphate (acyl-PO(4)) to glycerol-3-phosphate (G3P) to form lysophosphatidic acid (LPA). This enzyme utilizes acyl-phosphate as fatty acyl donor, but not acyl-CoA or acyl-ACP. The chain is Glycerol-3-phosphate acyltransferase from Hahella chejuensis (strain KCTC 2396).